The sequence spans 386 residues: MSYIFSSESVSKGHPDKVADFIADSVLDLVLKNDPKARCAIEVALAHTTVYIFGEVSTSYILTDEIIIETAKKAIDFCGYNDEKFIFDAKSATYHVNIHKQSADIALGVDETDNKEQGAGDQGIMFGYAKDDTKELLPLPIFLAHELTKRLAFVREEGIVSGLGPDGKSQVSVLYNENHEPLEVTAIVLSTQHEASKTLESVKADMMKHVILEVIPKHLITDNTKYYINPTGRFVIGGPVGDSGLTGRKLIVDTYGGYSRHGGGAFSGKDASKVDRSASYMARYLAKQVVGSGIAKTCEIQLAYAIGVAEPVSLYVNTFGTSKVSNEVIAETISKHFDLRPKAIINYLGLTNPIFKQTTHNGHFGKLESNLSWEKLDKIEIFEQLV.

Histidine 14 is an ATP binding site. Aspartate 16 provides a ligand contact to Mg(2+). Residue glutamate 42 participates in K(+) binding. L-methionine-binding residues include glutamate 55 and glutamine 101. The segment at 101–111 is flexible loop; the sequence is QSADIALGVDE. ATP-binding positions include 166 to 168, 233 to 234, aspartate 242, 248 to 249, alanine 265, and lysine 269; these read DGK, RF, and RK. An L-methionine-binding site is contributed by aspartate 242. Lysine 273 is an L-methionine binding site.

This sequence belongs to the AdoMet synthase family. As to quaternary structure, homotetramer; dimer of dimers. Mg(2+) serves as cofactor. Requires K(+) as cofactor.

Its subcellular location is the cytoplasm. It carries out the reaction L-methionine + ATP + H2O = S-adenosyl-L-methionine + phosphate + diphosphate. Its pathway is amino-acid biosynthesis; S-adenosyl-L-methionine biosynthesis; S-adenosyl-L-methionine from L-methionine: step 1/1. Catalyzes the formation of S-adenosylmethionine (AdoMet) from methionine and ATP. The overall synthetic reaction is composed of two sequential steps, AdoMet formation and the subsequent tripolyphosphate hydrolysis which occurs prior to release of AdoMet from the enzyme. The sequence is that of S-adenosylmethionine synthase from Acholeplasma laidlawii (strain PG-8A).